A 150-amino-acid polypeptide reads, in one-letter code: Large ribosomal subunit protein uL15 (150 aa).

The span at 1–15 (MNLSNLQPAEGSTHN) shows a compositional bias: polar residues. A disordered region spans residues 1 to 52 (MNLSNLQPAEGSTHNQNKRLGRGEGSGKGGTSARGHKGAKSRSGYSKKIGFE). Residues 23 to 32 (GEGSGKGGTS) show a composition bias toward gly residues.

This sequence belongs to the universal ribosomal protein uL15 family. As to quaternary structure, part of the 50S ribosomal subunit.

Functionally, binds to the 23S rRNA. The protein is Large ribosomal subunit protein uL15 of Flavobacterium psychrophilum (strain ATCC 49511 / DSM 21280 / CIP 103535 / JIP02/86).